The chain runs to 2274 residues: Adenomatous polyposis coli protein 2 (2274 aa).

Residues 5–59 (MASYEQLVRQVEALKAENTHLRQELRDNSSHLSKLETETSGMKEVLKHLQGKLEQ) are a coiled coil. Disordered stretches follow at residues 97–120 (GPEPAARTPEGSPVHGSGPSKDSF) and 248–269 (VEEEQEAEVPTHPEDGTPQPGN). ARM repeat units follow at residues 301-341 (PESC…GAKD), 472-511 (ANKATLCARRGCMEAIVAQLGSESEELHQVVSSILRNLSW), 515-555 (INSK…NLSA), 557-602 (STEN…NVSS), 608-647 (EDYRQVLRDHNCLQTLLQHLTSHSLTIVSNACGTLWNLSA), and 650-689 (PRDQELLWDLGAVGMLRNLVHSKHKMIAMGSAAALRNLLA). The stretch at 832-856 (AAKAKAKLALAVARIDRLVEDISAL) forms a coiled coil. 3 disordered regions span residues 859–901 (SSDD…GSRA), 1061–1143 (CSSL…NCVQ), and 1165–1216 (SIAS…TSQF). The span at 861–870 (DDSFSLSSGD) shows a compositional bias: low complexity. The stretch at 1049–1068 (LVAQDGPMSLSRCSSLSSLS) is repeat 1. The segment at 1049 to 1565 (LVAQDGPMSL…SLTSSASSLS (517 aa)) is 5 X 20 AA approximate repeat of F-X-V-E-X-T-P-X-C-F-S-R-X-S-S-L-S-S-L-S. The tract at residues 1049–1565 (LVAQDGPMSL…SLTSSASSLS (517 aa)) is interaction with CTNNB1. Over residues 1077 to 1086 (QAENLDSDSS) the composition is skewed to polar residues. Residues 1092–1103 (EAGPGEAELGRA) are compositionally biased toward low complexity. Residues 1133–1143 (TPSSSSENCVQ) show a composition bias toward polar residues. Copy 2 of the repeat occupies 1140–1159 (NCVQETPLVLSRCSSVSSLG). Residues 1250–1269 (FTVEKPDENFSCASSLSALA) form repeat 3. 6 disordered regions span residues 1290–1323 (ERAVGGGGHRRRDEAASRLDGPAPAGSRARSATD), 1368–1480 (RGDD…LQSL), 1493–1631 (FYDS…DIRP), 1699–2003 (STLQ…RGRP), 2022–2122 (PRQP…IKDE), and 2135–2274 (TALP…SLLE). Positions 1374 to 1397 (TDSAEGTPVNFSSAASLSDETLQG) are enriched in polar residues. Repeat 4 spans residues 1375-1394 (DSAEGTPVNFSSAASLSDET). The segment covering 1399–1411 (SRDKPAGPGDRQK) has biased composition (basic and acidic residues). A compositionally biased stretch (polar residues) spans 1455-1470 (RPQSARSNRDSSCQTR). Residues 1517 to 1529 (LKREKPAGRKETP) are compositionally biased toward basic and acidic residues. Residues 1546 to 1565 (LIVDETPPCYSLTSSASSLS) form repeat 5. Positions 1556 to 1574 (SLTSSASSLSEPEAPEQPA) are enriched in low complexity. Phosphoserine is present on residues serine 1563 and serine 1565. Over residues 1608–1624 (PRRRTQVPGSRRRKPRA) the composition is skewed to basic residues. Composition is skewed to low complexity over residues 1780-1795 (SGPCTTPKKTGTSGTT) and 1839-1868 (LAKTPSSSSSQTSPASQPLPRRSPLATPTG). Positions 1792–1871 (SGTTQPETVT…PLATPTGGPL (80 aa)) are required for localization to microtubules and function in microtubule stabilization. Serine 1861 carries the post-translational modification Phosphoserine. Residues 1910-1921 (RVPPPLARPSPE) are compositionally biased toward pro residues. 2 stretches are compositionally biased toward low complexity: residues 1945 to 1955 (RMASARSSGSE) and 1983 to 1997 (LSSADSTASTSQAAS). Positions 2037–2114 (GLAPLAPRRT…PLPRVAPPGT (78 aa)) are interaction with MAPRE1 and MAPRE3. Positions 2165-2179 (DVATSKTNSSTSPSL) are enriched in polar residues.

This sequence belongs to the adenomatous polyposis coli (APC) family. In terms of assembly, interacts with PSRC1. Interacts with MAPRE3. Interacts with APC, CTNNB1, TP53BP2, MAPRE1 and possibly with AXIN2. In terms of tissue distribution, expressed in brain and other neural tissues.

It is found in the cytoplasm. The protein localises to the cytoskeleton. Its subcellular location is the golgi apparatus. It localises to the perinuclear region. Stabilizes microtubules and may regulate actin fiber dynamics through the activation of Rho family GTPases. May also function in Wnt signaling by promoting the rapid degradation of CTNNB1. This chain is Adenomatous polyposis coli protein 2 (Apc2), found in Mus musculus (Mouse).